A 268-amino-acid chain; its full sequence is Ribosome maturation factor RimP (268 aa).

Disordered stretches follow at residues 1 to 41 (MGSA…GRGG) and 223 to 268 (LVEP…EMTR). Positions 32-41 (PSGSARGRGG) are enriched in low complexity. Over residues 248 to 257 (ESNDDGREAG) the composition is skewed to basic and acidic residues.

The protein belongs to the RimP family.

It is found in the cytoplasm. In terms of biological role, required for maturation of 30S ribosomal subunits. This is Ribosome maturation factor RimP from Frankia casuarinae (strain DSM 45818 / CECT 9043 / HFP020203 / CcI3).